Reading from the N-terminus, the 468-residue chain is uncharacterized protein (468 aa).

The segment at 447-468 (AVHVSNGDKPKVALPDTQLGSH) is disordered.

This sequence belongs to the mycobacterial PPE family.

This is an uncharacterized protein from Mycobacterium tuberculosis (strain CDC 1551 / Oshkosh).